Here is a 398-residue protein sequence, read N- to C-terminus: Putative F-box protein At1g67450 (398 aa).

Residues 2 to 56 (TMMMSDLPNDLVEEILSRVPITSLGAVRSTCKRWNGLSKDRIVCKGDANQQFTGF) form the F-box domain.

The polypeptide is Putative F-box protein At1g67450 (Arabidopsis thaliana (Mouse-ear cress)).